We begin with the raw amino-acid sequence, 21 residues long: Fibrinogen beta chain (21 aa).

Gln1 is modified (pyrrolidone carboxylic acid). Positions 1–11 are enriched in acidic residues; the sequence is QHSTDYDEVED. Positions 1–21 are disordered; sequence QHSTDYDEVEDDRAKLHLDAR. An O-linked (GalNAc...) threonine glycan is attached at Thr4. Tyr6 is modified (sulfotyrosine). Basic and acidic residues predominate over residues 12-21; sequence DRAKLHLDAR.

In terms of assembly, heterohexamer; disulfide linked. Contains 2 sets of 3 non-identical chains (alpha, beta and gamma). The 2 heterotrimers are in head to head conformation with the N-termini in a small central domain. In terms of processing, conversion of fibrinogen to fibrin is triggered by thrombin, which cleaves fibrinopeptides A and B from alpha and beta chains, and thus exposes the N-terminal polymerization sites responsible for the formation of the soft clot.

It localises to the secreted. Cleaved by the protease thrombin to yield monomers which, together with fibrinogen alpha (FGA) and fibrinogen gamma (FGG), polymerize to form an insoluble fibrin matrix. Fibrin has a major function in hemostasis as one of the primary components of blood clots. In addition, functions during the early stages of wound repair to stabilize the lesion and guide cell migration during re-epithelialization. Was originally thought to be essential for platelet aggregation, based on in vitro studies using anticoagulated blood. However subsequent studies have shown that it is not absolutely required for thrombus formation in vivo. Enhances expression of SELP in activated platelets. Maternal fibrinogen is essential for successful pregnancy. Fibrin deposition is also associated with infection, where it protects against IFNG-mediated hemorrhage. May also facilitate the antibacterial immune response via both innate and T-cell mediated pathways. The sequence is that of Fibrinogen beta chain (FGB) from Muntiacus muntjak (Barking deer).